An 87-amino-acid chain; its full sequence is Probable Fe(2+)-trafficking protein (87 aa).

It belongs to the Fe(2+)-trafficking protein family.

Functionally, could be a mediator in iron transactions between iron acquisition and iron-requiring processes, such as synthesis and/or repair of Fe-S clusters in biosynthetic enzymes. In Francisella tularensis subsp. novicida (strain U112), this protein is Probable Fe(2+)-trafficking protein.